The sequence spans 106 residues: MLWNLLALHQIGQRTISTASHRHFKNKVPEKQKLFQEDDGIPLYLKGGIADALLHRATMILTVGGTAYAIYQLAVASFPNKGVTSIIPAITWFTFIQLSMDQKSDK.

The transit peptide at 1 to 23 (MLWNLLALHQIGQRTISTASHRH) directs the protein to the mitochondrion.

Belongs to the cytochrome c oxidase VIIa family.

The protein resides in the mitochondrion inner membrane. This chain is Putative cytochrome c oxidase subunit 7A3, mitochondrial (COX7A2P2), found in Homo sapiens (Human).